A 138-amino-acid chain; its full sequence is ATP synthase epsilon chain (138 aa).

The protein belongs to the ATPase epsilon chain family. F-type ATPases have 2 components, CF(1) - the catalytic core - and CF(0) - the membrane proton channel. CF(1) has five subunits: alpha(3), beta(3), gamma(1), delta(1), epsilon(1). CF(0) has three main subunits: a, b and c.

The protein localises to the cell membrane. Produces ATP from ADP in the presence of a proton gradient across the membrane. This chain is ATP synthase epsilon chain, found in Streptococcus equi subsp. zooepidemicus (strain H70).